The sequence spans 213 residues: Nucleolar protein 12 (213 aa).

Residues 32–95 (GFHKRKVERK…RLVTAKTESV (64 aa)) adopt a coiled-coil conformation. Residues 117–213 (ARLLGLPTPE…LTGKARHSGE (97 aa)) form a disordered region. Composition is skewed to basic residues over residues 169-181 (AHSR…KRLR) and 197-213 (SKTR…HSGE).

Belongs to the RRP17 family. Interacts with KIAA1191.

Its subcellular location is the nucleus. The protein localises to the nucleolus. It localises to the cytoplasm. In terms of biological role, multifunctional RNA binding protein that plays a role in RNA metabolism and DNA maintenance. Participates in the resolution of DNA stress and the maintenance of genome integrity by localizing to sites of DNA insults. Also plays a role in proper nucleolar organization by limiting nucleolar size and regulating nucleolar number. Mechanistically, regulates the nucleolar levels of fibrillarin and nucleolin, two key players in pre-rRNA processing and ribosome assembly. The polypeptide is Nucleolar protein 12 (NOL12) (Bos taurus (Bovine)).